The chain runs to 228 residues: Deoxyribose-phosphate aldolase (228 aa).

Catalysis depends on aspartate 96, which acts as the Proton donor/acceptor. Lysine 157 (schiff-base intermediate with acetaldehyde) is an active-site residue. Lysine 185 (proton donor/acceptor) is an active-site residue.

The protein belongs to the DeoC/FbaB aldolase family. DeoC type 1 subfamily.

It localises to the cytoplasm. It catalyses the reaction 2-deoxy-D-ribose 5-phosphate = D-glyceraldehyde 3-phosphate + acetaldehyde. It participates in carbohydrate degradation; 2-deoxy-D-ribose 1-phosphate degradation; D-glyceraldehyde 3-phosphate and acetaldehyde from 2-deoxy-alpha-D-ribose 1-phosphate: step 2/2. Functionally, catalyzes a reversible aldol reaction between acetaldehyde and D-glyceraldehyde 3-phosphate to generate 2-deoxy-D-ribose 5-phosphate. In Picosynechococcus sp. (strain ATCC 27264 / PCC 7002 / PR-6) (Agmenellum quadruplicatum), this protein is Deoxyribose-phosphate aldolase.